Consider the following 197-residue polypeptide: Nascent polypeptide-associated complex subunit alpha (197 aa).

The span at 1–18 shows a compositional bias: basic and acidic residues; the sequence is MTGSTETRHNEKDVKEPQ. Positions 1 to 30 are disordered; the sequence is MTGSTETRHNEKDVKEPQVDSDADSDNEAI. Positions 19-28 are enriched in acidic residues; the sequence is VDSDADSDNE. An NAC-A/B domain is found at 58-123; that stretch reads SRSEKKARKL…AKIEDLTQHA (66 aa). A disordered region spans residues 134–155; the sequence is TREAPQLKTVEEDDNEDVEEDS. The segment covering 144–155 has biased composition (acidic residues); that stretch reads EEDDNEDVEEDS. One can recognise a UBA domain in the interval 158-195; it reads IEEKDIELVISQANTTRNKAIRALKDADNDIVNAIMSL.

It belongs to the NAC-alpha family.

Functionally, may promote appropriate targeting of ribosome-nascent polypeptide complexes. This chain is Nascent polypeptide-associated complex subunit alpha, found in Caenorhabditis briggsae.